Here is a 548-residue protein sequence, read N- to C-terminus: Sulochrin halogenase gedL (548 aa).

3 residues coordinate FAD: Gly-14, Ala-17, and Glu-47. Chloride-binding residues include Ser-333 and Gly-334. Position 335 (Val-335) interacts with FAD.

It belongs to the flavin-dependent halogenase family.

The catalysed reaction is sulochrin + 2 FADH2 + 2 chloride + 2 O2 = dihydrogeodin + 2 FAD + 4 H2O + H(+). Its pathway is secondary metabolite biosynthesis. Its function is as follows. Sulochrin halogenase; part of the gene cluster that mediates the biosynthesis of geodin, an intermediate in the biosynthesis of other natural products. The pathway begins with the synthesis of atrochrysone thioester by the polyketide synthase (PKS) gedC. The atrochrysone carboxyl ACP thioesterase gedB then breaks the thioester bond and releases the atrochrysone carboxylic acid from gedC. The atrochrysone carboxylic acid is then converted to atrochrysone which is further transformed into emodinanthrone. The next step is performed by the emodinanthrone oxygenase gedH that catalyzes the oxidation of emodinanthrone to emodin. Emodin O-methyltransferase encoded probably by gedA then catalyzes methylation of the 8-hydroxy group of emodin to form questin. Ring cleavage of questin by questin oxidase gedK leads to desmethylsulochrin via several intermediates including questin epoxide. Another methylation step probably catalyzed by methyltransferase gedG leads to the formation of sulochrin which is further converted to dihydrogeodin by the sulochrin halogenase gedL. Finally, the dihydrogeodin oxidase gedJ catalyzes the stereospecific phenol oxidative coupling reaction converting dihydrogeodin to geodin. The chain is Sulochrin halogenase gedL from Aspergillus terreus (strain NIH 2624 / FGSC A1156).